Here is a 376-residue protein sequence, read N- to C-terminus: MHRPELKNFRRIVVKVGSSLLIDSEAGEVKAAWLAALAADIAELHLHGRDVLIVSSGSIALGRSRLKLARGPLKLEESQAAAAVGQIALARIWSEVLGDHGIGAGQILVTLQDTEERRRYLNARSTIGKLLEWRAVPVINENDTVATAEIRYGDNDRLAARVATMSSADLLILLSDIDGLYDAPPGANPDAKLIPVVEQVTAEIEAMAGGAESELSRGGMRTKIEAAKIATTAGTHMLIASGKIDHPLRAIANGGACTWFLTPANPVTARKRWIAGSLEPKGTLTIDAGAVTALRAGKSLLPAGVIRVDGHFARGDAVVVRGPDTDEIGRGLVAYDADDADRIKGHSSPDVMSILGITGRAEMIHRDDLVMGAVPG.

Lysine 15 provides a ligand contact to ATP. Residues serine 56, aspartate 143, and asparagine 155 each contribute to the substrate site. 175–176 (SD) contacts ATP. Residues 281 to 358 (KGTLTIDAGA…PDVMSILGIT (78 aa)) enclose the PUA domain.

Belongs to the glutamate 5-kinase family.

It localises to the cytoplasm. The catalysed reaction is L-glutamate + ATP = L-glutamyl 5-phosphate + ADP. The protein operates within amino-acid biosynthesis; L-proline biosynthesis; L-glutamate 5-semialdehyde from L-glutamate: step 1/2. Its function is as follows. Catalyzes the transfer of a phosphate group to glutamate to form L-glutamate 5-phosphate. The polypeptide is Glutamate 5-kinase (Rhodopseudomonas palustris (strain BisB18)).